We begin with the raw amino-acid sequence, 527 residues long: DUF21 domain-containing protein At1g47330 (527 aa).

Over 1 to 15 (MSSDIPCCGTTFSLY) the chain is Extracellular. A CNNM transmembrane domain is found at 8-191 (CGTTFSLYVV…GKGGDLTTDE (184 aa)). The helical transmembrane segment at 16 to 36 (VVIIIALVAFAGLMAGLTLGL) threads the bilayer. Residues 37–70 (MSLGLVDLEVLIKSGRPQDRINAGKIFPVVKNQH) lie on the Cytoplasmic side of the membrane. The chain crosses the membrane as a helical span at residues 71-91 (LLLCTLLIGNSMAMEALPIFL). Residues 92–93 (DK) lie on the Extracellular side of the membrane. The helical transmembrane segment at 94–114 (IVPPWLAILLSVTLILVFGEI) threads the bilayer. At 115–126 (MPQAVCTRYGLK) the chain is on the cytoplasmic side. The chain crosses the membrane as a helical span at residues 127 to 147 (VGAIMAPFVRVLLVLFFPISY). The Extracellular portion of the chain corresponds to 148–527 (PISKVLDWML…PKHEESTQTL (380 aa)). CBS domains are found at residues 210–271 (MTPI…EVPL), 274–334 (MSMR…TKDE), and 366–435 (KSEN…ILDE). 3 disordered regions span residues 307-335 (KDLD…KDEL), 358-384 (ETGD…LLAA), and 464-527 (ITQS…TQTL). The residue at position 315 (S315) is a Phosphoserine. Residues 358-369 (ETGDAKSGKSEN) are compositionally biased toward basic and acidic residues. Residues 464 to 501 (ITQSSSGSTSPNQTSHMATPDSSPTTKPSNSSPTRKPS) show a composition bias toward low complexity. N-linked (GlcNAc...) asparagine glycosylation is present at N475. The segment covering 502-515 (VSSPTREPSDSSHS) has biased composition (polar residues). A compositionally biased stretch (basic and acidic residues) spans 518–527 (PKHEESTQTL).

It localises to the membrane. In Arabidopsis thaliana (Mouse-ear cress), this protein is DUF21 domain-containing protein At1g47330 (CBSDUF7).